The primary structure comprises 185 residues: Protein FAM219A (185 aa).

Met-1 is modified (N-acetylmethionine). The interval 1 to 131 is disordered; that stretch reads MMEEIDRFQV…SRYSSSGYSS (131 aa). Ser-47 is subject to Phosphoserine. Basic and acidic residues predominate over residues 52–61; sequence KLEKQRELAR. Residues 66 to 80 are compositionally biased toward polar residues; it reads KNGSMGSPVNQQPKK. Phosphoserine occurs at positions 72 and 102. Thr-113 carries the post-translational modification Phosphothreonine. A phosphoserine mark is found at Ser-115 and Ser-122. The span at 122–131 shows a compositional bias: low complexity; it reads SRYSSSGYSS.

This sequence belongs to the FAM219 family.

The sequence is that of Protein FAM219A (FAM219A) from Homo sapiens (Human).